Reading from the N-terminus, the 142-residue chain is Large ribosomal subunit protein uL11 (142 aa).

Belongs to the universal ribosomal protein uL11 family. In terms of assembly, part of the ribosomal stalk of the 50S ribosomal subunit. Interacts with L10 and the large rRNA to form the base of the stalk. L10 forms an elongated spine to which L12 dimers bind in a sequential fashion forming a multimeric L10(L12)X complex. Post-translationally, one or more lysine residues are methylated.

In terms of biological role, forms part of the ribosomal stalk which helps the ribosome interact with GTP-bound translation factors. The protein is Large ribosomal subunit protein uL11 of Erwinia tasmaniensis (strain DSM 17950 / CFBP 7177 / CIP 109463 / NCPPB 4357 / Et1/99).